Here is a 372-residue protein sequence, read N- to C-terminus: Glutamate 5-kinase (372 aa).

Lys-14 lines the ATP pocket. Residues Ser-54, Asp-141, and Asn-153 each contribute to the substrate site. 173 to 174 (TD) is a binding site for ATP. The PUA domain occupies 280-358 (AGAVVLDNGA…ADIAAILGFV (79 aa)).

It belongs to the glutamate 5-kinase family.

It is found in the cytoplasm. The catalysed reaction is L-glutamate + ATP = L-glutamyl 5-phosphate + ADP. It participates in amino-acid biosynthesis; L-proline biosynthesis; L-glutamate 5-semialdehyde from L-glutamate: step 1/2. Catalyzes the transfer of a phosphate group to glutamate to form L-glutamate 5-phosphate. The protein is Glutamate 5-kinase of Janthinobacterium sp. (strain Marseille) (Minibacterium massiliensis).